A 513-amino-acid chain; its full sequence is Chromosomal replication initiator protein DnaA (513 aa).

Residues 1–87 form a domain I, interacts with DnaA modulators region; sequence MSVELWQQCV…IGSKRSSAPR (87 aa). The segment at 87 to 176 is domain II; the sequence is RAAPNAPLAA…QVEGALKHTS (90 aa). Residues 113–163 are disordered; that stretch reads AAPAPAPAPTSAPAKKAAAQKAAEVSEEPSRDSFDPMAGASSQQAPVRAEQ. Residues 123–135 are compositionally biased toward low complexity; that stretch reads SAPAKKAAAQKAA. Positions 177 to 393 are domain III, AAA+ region; sequence YLNRTFTFEN…GALKRVIAHS (217 aa). ATP contacts are provided by Gly221, Gly223, Lys224, and Thr225. A domain IV, binds dsDNA region spans residues 394 to 513; it reads HFMGRDITIE…YKNLLRTLTT (120 aa).

Belongs to the DnaA family. Oligomerizes as a right-handed, spiral filament on DNA at oriC.

It localises to the cytoplasm. Plays an essential role in the initiation and regulation of chromosomal replication. ATP-DnaA binds to the origin of replication (oriC) to initiate formation of the DNA replication initiation complex once per cell cycle. Binds the DnaA box (a 9 base pair repeat at the origin) and separates the double-stranded (ds)DNA. Forms a right-handed helical filament on oriC DNA; dsDNA binds to the exterior of the filament while single-stranded (ss)DNA is stabiized in the filament's interior. The ATP-DnaA-oriC complex binds and stabilizes one strand of the AT-rich DNA unwinding element (DUE), permitting loading of DNA polymerase. After initiation quickly degrades to an ADP-DnaA complex that is not apt for DNA replication. Binds acidic phospholipids. The polypeptide is Chromosomal replication initiator protein DnaA (Pseudomonas fluorescens (strain ATCC BAA-477 / NRRL B-23932 / Pf-5)).